The sequence spans 347 residues: Melanoma-associated antigen B10 (347 aa).

Over residues 1–18 the composition is skewed to basic residues; that stretch reads MPRGQKSKLRAREKRRQA. Disordered regions lie at residues 1-20 and 56-92; these read MPRG…QARG and GASN…QMEE. Low complexity predominate over residues 67–78; that stretch reads AQSTSTSATAAS. Positions 81–92 are enriched in basic and acidic residues; that stretch reads RHPEGVNDQMEE. The 200-residue stretch at 111–310 folds into the MAGE domain; it reads VDEKVIILVH…SEFSNWYTEA (200 aa). Positions 328–347 are disordered; that stretch reads VSATAGARSKVKSSKSSQLQ.

This is Melanoma-associated antigen B10 (MAGEB10) from Homo sapiens (Human).